The primary structure comprises 132 residues: UPF0299 membrane protein KPN78578_25390 (132 aa).

Transmembrane regions (helical) follow at residues 5–25 (LTII…LYAG), 38–60 (GSII…PQWV), 66–86 (ILIR…MQYW), and 93–113 (LGPV…VVSW).

It belongs to the UPF0299 family.

It localises to the cell inner membrane. The polypeptide is UPF0299 membrane protein KPN78578_25390 (Klebsiella pneumoniae subsp. pneumoniae (strain ATCC 700721 / MGH 78578)).